Here is a 247-residue protein sequence, read N- to C-terminus: Cell division protein ZapD (247 aa).

This sequence belongs to the ZapD family. As to quaternary structure, interacts with FtsZ.

Its subcellular location is the cytoplasm. In terms of biological role, cell division factor that enhances FtsZ-ring assembly. Directly interacts with FtsZ and promotes bundling of FtsZ protofilaments, with a reduction in FtsZ GTPase activity. The protein is Cell division protein ZapD of Salmonella choleraesuis (strain SC-B67).